The primary structure comprises 974 residues: UvrABC system protein A (974 aa).

34-41 is a binding site for ATP; sequence GLSGSGKS. 2 ABC transporter domains span residues 331 to 610 and 630 to 959; these read WARS…TNSL and ISKT…QFLK. ATP is bound at residue 663 to 670; it reads GVSGGGKS. The C4-type zinc finger occupies 762-788; that stretch reads CEACQGDGVIKIEMHFLPDVYVTCDVC.

The protein belongs to the ABC transporter superfamily. UvrA family. As to quaternary structure, forms a heterotetramer with UvrB during the search for lesions.

It localises to the cytoplasm. Functionally, the UvrABC repair system catalyzes the recognition and processing of DNA lesions. UvrA is an ATPase and a DNA-binding protein. A damage recognition complex composed of 2 UvrA and 2 UvrB subunits scans DNA for abnormalities. When the presence of a lesion has been verified by UvrB, the UvrA molecules dissociate. This chain is UvrABC system protein A, found in Brucella abortus (strain 2308).